The following is a 215-amino-acid chain: Thymidylate kinase (215 aa).

11–18 is a binding site for ATP; the sequence is GIDGAGKS.

Belongs to the thymidylate kinase family.

The catalysed reaction is dTMP + ATP = dTDP + ADP. Functionally, phosphorylation of dTMP to form dTDP in both de novo and salvage pathways of dTTP synthesis. This chain is Thymidylate kinase, found in Nitrosomonas eutropha (strain DSM 101675 / C91 / Nm57).